The chain runs to 618 residues: Proline--tRNA ligase (618 aa).

It belongs to the class-II aminoacyl-tRNA synthetase family. ProS type 1 subfamily. In terms of assembly, homodimer.

It is found in the cytoplasm. It catalyses the reaction tRNA(Pro) + L-proline + ATP = L-prolyl-tRNA(Pro) + AMP + diphosphate. In terms of biological role, catalyzes the attachment of proline to tRNA(Pro) in a two-step reaction: proline is first activated by ATP to form Pro-AMP and then transferred to the acceptor end of tRNA(Pro). As ProRS can inadvertently accommodate and process non-cognate amino acids such as alanine and cysteine, to avoid such errors it has two additional distinct editing activities against alanine. One activity is designated as 'pretransfer' editing and involves the tRNA(Pro)-independent hydrolysis of activated Ala-AMP. The other activity is designated 'posttransfer' editing and involves deacylation of mischarged Ala-tRNA(Pro). The misacylated Cys-tRNA(Pro) is not edited by ProRS. The polypeptide is Proline--tRNA ligase (Streptococcus pyogenes serotype M5 (strain Manfredo)).